Reading from the N-terminus, the 249-residue chain is Phosphate import ATP-binding protein PstB (249 aa).

An ABC transporter domain is found at 4–244 (IQTKDLNLYY…PKDKRTEDYI (241 aa)). 36–43 (GPSGCGKS) provides a ligand contact to ATP.

The protein belongs to the ABC transporter superfamily. Phosphate importer (TC 3.A.1.7) family. As to quaternary structure, the complex is composed of two ATP-binding proteins (PstB), two transmembrane proteins (PstC and PstA) and a solute-binding protein (PstS).

Its subcellular location is the cell membrane. It catalyses the reaction phosphate(out) + ATP + H2O = ADP + 2 phosphate(in) + H(+). In terms of biological role, part of the ABC transporter complex PstSACB involved in phosphate import. Responsible for energy coupling to the transport system. The chain is Phosphate import ATP-binding protein PstB from Clostridium acetobutylicum (strain ATCC 824 / DSM 792 / JCM 1419 / IAM 19013 / LMG 5710 / NBRC 13948 / NRRL B-527 / VKM B-1787 / 2291 / W).